The chain runs to 427 residues: Transcription termination factor Rho (427 aa).

The 76-residue stretch at 55–130 (YFFGEGVLEI…IKIEAINYRP (76 aa)) folds into the Rho RNA-BD domain. ATP contacts are provided by residues 173–178 (GKGQRG), 185–190 (KAGKTT), and Arg-216.

Belongs to the Rho family. As to quaternary structure, homohexamer. The homohexamer assembles into an open ring structure.

Its function is as follows. Facilitates transcription termination by a mechanism that involves Rho binding to the nascent RNA, activation of Rho's RNA-dependent ATPase activity, and release of the mRNA from the DNA template. The polypeptide is Transcription termination factor Rho (Thermotoga maritima (strain ATCC 43589 / DSM 3109 / JCM 10099 / NBRC 100826 / MSB8)).